Reading from the N-terminus, the 149-residue chain is Urease accessory protein UreE (149 aa).

It belongs to the UreE family.

It localises to the cytoplasm. In terms of biological role, involved in urease metallocenter assembly. Binds nickel. Probably functions as a nickel donor during metallocenter assembly. The polypeptide is Urease accessory protein UreE (Synechococcus sp. (strain JA-3-3Ab) (Cyanobacteria bacterium Yellowstone A-Prime)).